Here is a 743-residue protein sequence, read N- to C-terminus: Threonine synthase-like 1 (743 aa).

Lys-281 is subject to N6-acetyllysine. Lys-351 is modified (N6-(pyridoxal phosphate)lysine).

It belongs to the threonine synthase family. Pyridoxal 5'-phosphate is required as a cofactor.

This Homo sapiens (Human) protein is Threonine synthase-like 1 (THNSL1).